A 324-amino-acid chain; its full sequence is Glucokinase (324 aa).

ATP is bound at residue 6-11 (IDIGGT).

Belongs to the bacterial glucokinase family.

The protein resides in the cytoplasm. The enzyme catalyses D-glucose + ATP = D-glucose 6-phosphate + ADP + H(+). This is Glucokinase from Zymomonas mobilis subsp. mobilis (strain ATCC 31821 / ZM4 / CP4).